A 229-amino-acid polypeptide reads, in one-letter code: 5'-methylthioadenosine/S-adenosylhomocysteine nucleosidase (229 aa).

The active-site Proton acceptor is glutamate 12. Residues glycine 78, methionine 152, and 173 to 174 (ME) contribute to the substrate site. Aspartate 197 (proton donor) is an active-site residue.

It belongs to the PNP/UDP phosphorylase family. MtnN subfamily.

The enzyme catalyses S-adenosyl-L-homocysteine + H2O = S-(5-deoxy-D-ribos-5-yl)-L-homocysteine + adenine. The catalysed reaction is S-methyl-5'-thioadenosine + H2O = 5-(methylsulfanyl)-D-ribose + adenine. It carries out the reaction 5'-deoxyadenosine + H2O = 5-deoxy-D-ribose + adenine. The protein operates within amino-acid biosynthesis; L-methionine biosynthesis via salvage pathway; S-methyl-5-thio-alpha-D-ribose 1-phosphate from S-methyl-5'-thioadenosine (hydrolase route): step 1/2. Catalyzes the irreversible cleavage of the glycosidic bond in both 5'-methylthioadenosine (MTA) and S-adenosylhomocysteine (SAH/AdoHcy) to adenine and the corresponding thioribose, 5'-methylthioribose and S-ribosylhomocysteine, respectively. Also cleaves 5'-deoxyadenosine, a toxic by-product of radical S-adenosylmethionine (SAM) enzymes, into 5-deoxyribose and adenine. The chain is 5'-methylthioadenosine/S-adenosylhomocysteine nucleosidase from Oceanobacillus iheyensis (strain DSM 14371 / CIP 107618 / JCM 11309 / KCTC 3954 / HTE831).